Reading from the N-terminus, the 3718-residue chain is Laminin subunit alpha-5 (3718 aa).

Residues Met1–Ala40 form the signal peptide. Residues Asp46–Arg304 form the Laminin N-terminal domain. 3 N-linked (GlcNAc...) asparagine glycosylation sites follow: Asn100, Asn148, and Asn248. Intrachain disulfides connect Cys305-Cys314, Cys307-Cys327, Cys329-Cys338, Cys341-Cys361, Cys364-Cys373, Cys366-Cys398, Cys401-Cys410, Cys413-Cys431, Cys434-Cys445, Cys436-Cys452, Cys454-Cys463, and Cys466-Cys476. Laminin EGF-like domains lie at Cys305–Ser363, Cys364–Pro433, and Cys434–Leu479. Asn383 carries N-linked (GlcNAc...) asparagine glycosylation. A glycan (N-linked (GlcNAc...) asparagine) is linked at Asn457. Asn485 is a glycosylation site (N-linked (GlcNAc...) asparagine). Cystine bridges form between Cys500/Cys512, Cys502/Cys521, Cys523/Cys532, Cys535/Cys544, Cys547/Cys559, Cys549/Cys566, Cys568/Cys577, Cys580/Cys590, Cys593/Cys605, Cys595/Cys611, Cys613/Cys622, Cys625/Cys635, Cys638/Cys650, Cys640/Cys656, Cys658/Cys667, Cys670/Cys680, Cys683/Cys695, Cys685/Cys702, Cys704/Cys713, Cys716/Cys731, Cys752/Cys761, Cys764/Cys779, Cys782/Cys796, Cys784/Cys802, Cys804/Cys813, Cys816/Cys831, Cys834/Cys846, Cys836/Cys853, and Cys855/Cys864. Laminin EGF-like domains lie at Cys500–Pro546, Cys547–Leu592, Cys593–Ala637, Cys638–Pro682, Cys683–Ala728, Gly729–Arg781, and Cys782–Ser833. One can recognise a Laminin EGF-like 11; truncated domain in the interval Cys834 to Cys855. The interval Arg856–Pro1442 is domain IV 1 (domain IV B). Residues Asn905, Asn926, and Asn964 are each glycosylated (N-linked (GlcNAc...) asparagine). The tract at residues Leu1253–Leu1284 is disordered. A compositionally biased stretch (pro residues) spans Gly1262–Ala1275. An N-linked (GlcNAc...) asparagine glycan is attached at Asn1335. 16 cysteine pairs are disulfide-bonded: Cys1443/Cys1455, Cys1445/Cys1462, Cys1464/Cys1473, Cys1476/Cys1486, Cys1489/Cys1496, Cys1491/Cys1503, Cys1505/Cys1514, Cys1517/Cys1530, Cys1533/Cys1548, Cys1535/Cys1555, Cys1557/Cys1566, Cys1569/Cys1579, Cys1582/Cys1594, Cys1584/Cys1601, Cys1603/Cys1612, and Cys1615/Cys1630. 4 Laminin EGF-like domains span residues Cys1443–Pro1488, Cys1489–Glu1532, Cys1533–Pro1581, and Cys1582–Arg1632. A glycan (N-linked (GlcNAc...) asparagine) is linked at Asn1534. One can recognise a Laminin EGF-like 16; first part domain in the interval Cys1633–Cys1642. One can recognise a Laminin IV type A domain in the interval Asn1646–Leu1831. Short sequence motifs (cell attachment site) lie at residues Arg1723–Asp1725 and Arg1839–Asp1841. One can recognise a Laminin EGF-like 16; second part domain in the interval Cys1832–Pro1864. Cystine bridges form between Cys1865–Cys1874, Cys1867–Cys1881, Cys1884–Cys1893, Cys1896–Cys1912, Cys1915–Cys1930, Cys1917–Cys1939, Cys1941–Cys1950, Cys1953–Cys1968, Cys1971–Cys1986, Cys1973–Cys1993, Cys1996–Cys2005, Cys2008–Cys2022, Cys2025–Cys2035, Cys2027–Cys2042, Cys2044–Cys2053, Cys2056–Cys2069, Cys2072–Cys2083, Cys2074–Cys2090, Cys2092–Cys2101, Cys2104–Cys2116, Cys2119–Cys2126, Cys2121–Cys2133, Cys2135–Cys2144, and Cys2147–Cys2166. Laminin EGF-like domains are found at residues Cys1865–Ser1914, Cys1915–Pro1970, Cys1971–Arg2024, Cys2025–Pro2071, Cys2072–Arg2118, and Cys2119–Val2168. An N-linked (GlcNAc...) asparagine glycan is attached at Asn2021. The segment at Cys2169 to Val2735 is domain II and I. Residues Asn2198, Asn2211, Asn2365, Asn2395, Asn2425, Asn2503, and Asn2570 are each glycosylated (N-linked (GlcNAc...) asparagine). Coiled-coil stretches lie at residues Ala2205–Thr2257 and Thr2330–Asp2464. Coiled coils occupy residues Ala2604–Ala2621 and Ala2639–Arg2705. An N-linked (GlcNAc...) asparagine glycan is attached at Asn2709. 5 consecutive Laminin G-like domains span residues Lys2736–Cys2933, Gly2947–Cys3119, Thr3128–Cys3296, Ala3337–Cys3511, and Asp3518–Cys3689. Intrachain disulfides connect Cys2903-Cys2933 and Cys3094-Cys3119. 4 N-linked (GlcNAc...) asparagine glycosylation sites follow: Asn3111, Asn3213, Asn3261, and Asn3291. 2 disulfide bridges follow: Cys3265–Cys3296 and Cys3488–Cys3511. Asn3623 and Asn3673 each carry an N-linked (GlcNAc...) asparagine glycan. A disulfide bond links Cys3661 and Cys3689.

As to quaternary structure, laminin is a complex glycoprotein, consisting of three different polypeptide chains (alpha, beta, gamma), which are bound to each other by disulfide bonds into a cross-shaped molecule comprising one long and three short arms with globules at each end. Alpha-5 is a subunit of laminin-10 (laminin-511), laminin-11 (laminin-521) and laminin-15 (laminin-523). In terms of tissue distribution, in adult, high levels in heart, lung, and kidney; lower in brain, muscle and testis; very low in liver, gut and skin.

Its subcellular location is the secreted. It localises to the extracellular space. It is found in the extracellular matrix. The protein resides in the basement membrane. In terms of biological role, binding to cells via a high affinity receptor, laminin is thought to mediate the attachment, migration and organization of cells into tissues during embryonic development by interacting with other extracellular matrix components. Alpha-5 may be the major laminin alpha chain of adult epithelial and/or endothelial basal laminae. Plays a role in the regulation of skeletogenesis, through a mechanism that involves integrin-mediated signaling and PTK2B/PYK2. In Mus musculus (Mouse), this protein is Laminin subunit alpha-5 (Lama5).